The chain runs to 259 residues: 5'-nucleotidase SurE (259 aa).

Positions 13, 14, 44, and 100 each coordinate a divalent metal cation.

Belongs to the SurE nucleotidase family. The cofactor is a divalent metal cation.

Its subcellular location is the cytoplasm. It catalyses the reaction a ribonucleoside 5'-phosphate + H2O = a ribonucleoside + phosphate. In terms of biological role, nucleotidase that shows phosphatase activity on nucleoside 5'-monophosphates. This chain is 5'-nucleotidase SurE, found in Bacteroides thetaiotaomicron (strain ATCC 29148 / DSM 2079 / JCM 5827 / CCUG 10774 / NCTC 10582 / VPI-5482 / E50).